The following is a 580-amino-acid chain: Peptide transporter PTR_B (580 aa).

The span at 1–30 (MSTEKLQNDDKVVDEKYVDADEHSLVRSQD) shows a compositional bias: basic and acidic residues. The interval 1–45 (MSTEKLQNDDKVVDEKYVDADEHSLVRSQDESFPQTEEGGEPTDH) is disordered. Residues 57–78 (IPMSCWLVAIVELSERFTYYGL) form a helical membrane-spanning segment. An N-linked (GlcNAc...) asparagine glycan is attached at asparagine 101. 11 helical membrane passes run 107-127 (ALSY…AWIA), 134-154 (YFTI…LFIT), 163-183 (TTSL…TGGI), 219-239 (VSNV…SVIA), 249-269 (FWAA…ALVL), 326-346 (ALYA…YGQM), 370-390 (INSI…YPFI), 402-422 (IFWG…LQHF), 449-469 (IALQ…ASIT), 484-504 (SFIM…GIAL), and 513-533 (MVWT…IFWF).

It belongs to the major facilitator superfamily. Proton-dependent oligopeptide transporter (POT/PTR) (TC 2.A.17) family.

The protein resides in the cell membrane. It catalyses the reaction a dipeptide(out) + H(+)(out) = a dipeptide(in) + H(+)(in). The enzyme catalyses an L-amino acid tripeptide(out) + H(+)(out) = an L-amino acid tripeptide(in) + H(+)(in). Functionally, peptide transporter that exploits the inwardly directed proton motive force to facilitate the cellular uptake of di/tripeptides. Shows strong uptake specificity towards the dipeptides Tyr-Phe and Gly-His, when compared to PTR_A and PTR_C. This is Peptide transporter PTR_B from Candidozyma auris (Yeast).